A 169-amino-acid polypeptide reads, in one-letter code: Peptide methionine sulfoxide reductase MsrA (169 aa).

The active site involves cysteine 11.

It belongs to the MsrA Met sulfoxide reductase family.

The catalysed reaction is L-methionyl-[protein] + [thioredoxin]-disulfide + H2O = L-methionyl-(S)-S-oxide-[protein] + [thioredoxin]-dithiol. It carries out the reaction [thioredoxin]-disulfide + L-methionine + H2O = L-methionine (S)-S-oxide + [thioredoxin]-dithiol. Functionally, has an important function as a repair enzyme for proteins that have been inactivated by oxidation. Catalyzes the reversible oxidation-reduction of methionine sulfoxide in proteins to methionine. This chain is Peptide methionine sulfoxide reductase MsrA, found in Leifsonia xyli subsp. xyli (strain CTCB07).